Consider the following 178-residue polypeptide: Bifunctional protein PyrR (178 aa).

Residues 99 to 111 carry the PRPP-binding motif; the sequence is VIIVDDVLYTCRT.

Belongs to the purine/pyrimidine phosphoribosyltransferase family. PyrR subfamily. In terms of assembly, homodimer and homohexamer; in equilibrium.

The enzyme catalyses UMP + diphosphate = 5-phospho-alpha-D-ribose 1-diphosphate + uracil. Functionally, regulates transcriptional attenuation of the pyrimidine nucleotide (pyr) operon by binding in a uridine-dependent manner to specific sites on pyr mRNA. This disrupts an antiterminator hairpin in the RNA and favors formation of a downstream transcription terminator, leading to a reduced expression of downstream genes. Its function is as follows. Also displays a weak uracil phosphoribosyltransferase activity which is not physiologically significant. In Clostridium perfringens (strain ATCC 13124 / DSM 756 / JCM 1290 / NCIMB 6125 / NCTC 8237 / Type A), this protein is Bifunctional protein PyrR.